A 135-amino-acid polypeptide reads, in one-letter code: Ribonuclease P protein component (135 aa).

Belongs to the RnpA family. In terms of assembly, consists of a catalytic RNA component (M1 or rnpB) and a protein subunit.

It carries out the reaction Endonucleolytic cleavage of RNA, removing 5'-extranucleotides from tRNA precursor.. In terms of biological role, RNaseP catalyzes the removal of the 5'-leader sequence from pre-tRNA to produce the mature 5'-terminus. It can also cleave other RNA substrates such as 4.5S RNA. The protein component plays an auxiliary but essential role in vivo by binding to the 5'-leader sequence and broadening the substrate specificity of the ribozyme. The protein is Ribonuclease P protein component of Xylella fastidiosa (strain 9a5c).